Here is a 5084-residue protein sequence, read N- to C-terminus: Apicidin F synthase (5084 aa).

The interval 209–606 (ARILQRQPDK…VGRLDSQVKL (398 aa)) is adenylation 1. Residues 731 to 808 (HETDNCQRLL…EAASSMREVV (78 aa)) enclose the Carrier 1 domain. At Ser-768 the chain carries O-(pantetheine 4'-phosphoryl)serine. 2 condensation regions span residues 822–1124 (YPLS…FPIY) and 1309–1609 (EIYC…SILV). The tract at residues 1788-2192 (EDPTREAVFS…IGRKDNQIKI (405 aa)) is adenylation 2. One can recognise a Carrier 2 domain in the interval 2341–2415 (VVKDDPVSEL…DMAKGMAPLS (75 aa)). O-(pantetheine 4'-phosphoryl)serine is present on Ser-2376. The disordered stretch occupies residues 2415–2441 (SLTAPESTSSSSPQSFSTSTSTTIIEN). Residues 2421 to 2437 (STSSSSPQSFSTSTSTT) show a composition bias toward low complexity. Residues 2478 to 2755 (EDIFPCTPMQ…IVTLPRQLNI (278 aa)) form a condensation 3 region. The adenylation 3 stretch occupies residues 2935–3328 (RNNPRARAVV…GRRDGQIKLR (394 aa)). The Carrier 3 domain occupies 3463–3539 (ETWSSSEAIV…DMASRLSRPE (77 aa)). Ser-3500 is subject to O-(pantetheine 4'-phosphoryl)serine. The segment at 3581–3866 (EDIYPCTPLQ…IATVPSRTTI (286 aa)) is condensation 4. Residues 4029–4426 (RKQVELSPSH…TVSWIGRKDH (398 aa)) form an adenylation 4 region. One can recognise a Carrier 4 domain in the interval 4554-4631 (ALKTPKERLL…DMADLLGPLR (78 aa)). The residue at position 4592 (Ser-4592) is an O-(pantetheine 4'-phosphoryl)serine. A condensation 5 region spans residues 4669 to 4948 (EQIYPCTAYQ…ISKLPLRIQL (280 aa)).

It belongs to the NRP synthetase family.

It functions in the pathway secondary metabolite biosynthesis. Functionally, non-ribosomal peptide synthetase; part of the gene cluster that mediates the biosynthesis of the cyclic tetrapeptide apicidin F (APF). The non-ribosomal peptide synthetase apf1 incorporates four different amino acids to produce apicidin F: L-phenylalanine, D-pipecolic acid (D-pip), N-methoxy-L-tryptophan and L-2-aminooctanedioic acid. L-Phenylalanine is the only proteinogenic amino acid directly used by apf1. The 3 other apf1 substrates are non-proteinogenic and have to be modified by other enzymes of the cluster. Lysine is converted to delta-1-pyrroline-5-carboxylate (P5C) which is reduced to L-pipecolic acid (L-pip) by apf3. L-pip is epimerized to D-pip, probably by apf1 activity, prior to incorporation. L-Tryptophan is N-oxidyzed by one of the cytochrome P450 monooxygenases (apf7 or apf8), and further methylated at the hydroxy group by the O-methyltransferase apf6 to yield N-methoxy-L-tryptophan. The synthesis of the fourth apf1 substrate is more complex. The fatty acid synthase apf5 is involved in the synthesis of the octanoic acid backbone of L-2-aminooctanedioic acid by fixing one acetyl-CoA unit and three malonyl-CoA units. Then one of the cytochrome P450 monooxygenases (apf7 or apf8) may oxidize this backbone to 2-oxooctanoic acid. The aminotransferase apf4 is predicted to catalyze the exchange of the keto group with an amino group. The next step would be the oxidation of 2-aminooctanoic acid by one of the cytochrome P450 monooxygenases (apf7 or apf8). The last step is the oxidation of 2-amino-8-hydroxyoctanoic acid to 2-aminooctanedioic acid is catalyzed by the FAD-dependent monooxygenase apf9. The sequence is that of Apicidin F synthase from Gibberella fujikuroi (strain CBS 195.34 / IMI 58289 / NRRL A-6831) (Bakanae and foot rot disease fungus).